A 223-amino-acid polypeptide reads, in one-letter code: Adenylate kinase (223 aa).

Residue 10-15 (GSGKGT) coordinates ATP. The tract at residues 30-59 (ESGAIFRQHIGGGTELGKKAKEYIDRGDLV) is NMP. AMP contacts are provided by residues Ser-31, Arg-36, 57–59 (DLV), 84–87 (GFPR), and Gln-91. Residues 125–164 (GRRLCKNDNNHPNNIFIDAIKPDGDVCRVCGGSLSARADD) form an LID region. Residue Arg-126 participates in ATP binding. 2 residues coordinate AMP: Arg-161 and Arg-173. Gly-209 is a binding site for ATP.

This sequence belongs to the adenylate kinase family. As to quaternary structure, monomer.

It is found in the cytoplasm. It carries out the reaction AMP + ATP = 2 ADP. It participates in purine metabolism; AMP biosynthesis via salvage pathway; AMP from ADP: step 1/1. Functionally, catalyzes the reversible transfer of the terminal phosphate group between ATP and AMP. Plays an important role in cellular energy homeostasis and in adenine nucleotide metabolism. This is Adenylate kinase from Nitratidesulfovibrio vulgaris (strain DSM 19637 / Miyazaki F) (Desulfovibrio vulgaris).